The chain runs to 87 residues: uncharacterized protein (87 aa).

This is an uncharacterized protein from Methanocaldococcus jannaschii (strain ATCC 43067 / DSM 2661 / JAL-1 / JCM 10045 / NBRC 100440) (Methanococcus jannaschii).